A 291-amino-acid chain; its full sequence is AA14 family lytic polysaccharide monooxygenase (291 aa).

The first 17 residues, 1–17 (MLTTAILFTSLAGSAYA), serve as a signal peptide directing secretion. The N-linked (GlcNAc...) asparagine glycan is linked to N141. 3 disulfides stabilise this stretch: C192–C197, C199–C220, and C240–C247.

This sequence belongs to the polysaccharide monooxygenase AA14 family. Requires Cu(2+) as cofactor.

It is found in the secreted. Lytic polysaccharide monooxygenase (LPMO) that is active against heteroxylan, xyloglucan and cellulose in beta-cellulose and released native oligosaccharides and corresponding C1- and/or C4-oxidized products. May act mainly on heteroxylan with numerous arabinosyl substituents between cellulose fibers rather than on recalcitrant xylan tightly associated with cellulose. Catalysis by LPMOs requires the reduction of the active-site copper from Cu(II) to Cu(I) by a reducing agent and H(2)O(2) or O(2) as a cosubstrate. Shows a branched chain preference, and has synergistic effects with the Penicillium parvum debranching enzyme ABF62C in an enzyme- and ascorbic acid-dependent manner. Also has synergistic effects with the Penicillium parvum GH10 endoxylanase XYN1, and the degree of synergy was greater with step-by-step addition than with simultaneous addition. The protein is AA14 family lytic polysaccharide monooxygenase of Sordaria brevicollis.